We begin with the raw amino-acid sequence, 266 residues long: Type III pantothenate kinase (266 aa).

Residue 9 to 16 (DAGNSRIK) participates in ATP binding. Substrate is bound by residues Tyr-96 and 103-106 (GSDR). The Proton acceptor role is filled by Asp-105. ATP is bound at residue Thr-129. Thr-189 lines the substrate pocket.

The protein belongs to the type III pantothenate kinase family. Homodimer. NH4(+) serves as cofactor. The cofactor is K(+).

Its subcellular location is the cytoplasm. It carries out the reaction (R)-pantothenate + ATP = (R)-4'-phosphopantothenate + ADP + H(+). The protein operates within cofactor biosynthesis; coenzyme A biosynthesis; CoA from (R)-pantothenate: step 1/5. In terms of biological role, catalyzes the phosphorylation of pantothenate (Pan), the first step in CoA biosynthesis. The chain is Type III pantothenate kinase from Burkholderia cenocepacia (strain ATCC BAA-245 / DSM 16553 / LMG 16656 / NCTC 13227 / J2315 / CF5610) (Burkholderia cepacia (strain J2315)).